The chain runs to 436 residues: DEAD-box ATP-dependent RNA helicase CshB (436 aa).

The Q motif signature appears at 4–32 (QTFTQYDFKPFLIDAVRELRFTEPTGIQQ). Residues 35–209 (FPVVKKGVSV…KKYMENPEHI (175 aa)) enclose the Helicase ATP-binding domain. 48–55 (SQTGSGKT) contacts ATP. Positions 157–160 (DEAD) match the DEAD box motif. One can recognise a Helicase C-terminal domain in the interval 240 to 388 (MLLQFKPYLA…WADLGERRRR (149 aa)). Positions 385 to 436 (RRRRKSRKKPNDELDVMATKVIKKPKKVKPNYKRKLATERDKVKRKYSNKKR) are disordered. Basic residues-rich tracts occupy residues 405-419 (VIKK…YKRK) and 427-436 (VKRKYSNKKR).

This sequence belongs to the DEAD box helicase family. CshB subfamily.

It localises to the cytoplasm. It carries out the reaction ATP + H2O = ADP + phosphate + H(+). In terms of biological role, probable DEAD-box RNA helicase. May work in conjunction with the cold shock proteins to ensure proper initiation of transcription at low and optimal temperatures. Unwinds dsRNA in both 5'- and 3'-directions and shows RNA-dependent ATPase activity. Probably has a somewhat redundant function with CshA, as cshA can partially complement the growth effects of a cshB deletion. The polypeptide is DEAD-box ATP-dependent RNA helicase CshB (Bacillus cereus (strain ATCC 14579 / DSM 31 / CCUG 7414 / JCM 2152 / NBRC 15305 / NCIMB 9373 / NCTC 2599 / NRRL B-3711)).